We begin with the raw amino-acid sequence, 158 residues long: 18.2 kDa class I heat shock protein (158 aa).

One can recognise a sHSP domain in the interval glutamate 44–glycine 158.

Belongs to the small heat shock protein (HSP20) family. As to quaternary structure, forms oligomeric structures.

The protein localises to the cytoplasm. The sequence is that of 18.2 kDa class I heat shock protein (HSP18.2) from Medicago sativa (Alfalfa).